A 166-amino-acid polypeptide reads, in one-letter code: Ribosome biogenesis regulatory protein homolog (166 aa).

Ser34 and Ser64 each carry phosphoserine. Residues 144–166 are disordered; it reads KEKKLTSKQVRNTSKKIKRSRRH. The span at 156–166 shows a compositional bias: basic residues; that stretch reads TSKKIKRSRRH.

It belongs to the RRS1 family. Component of a hexameric 5S RNP precursor complex, composed of 5S RNA, rrs1, rpf2, rpl5a/rpl5b, rpl11a/rpl11b and syo1; this complex acts as a precursor for ribosome assembly. Interacts with sad1.

The protein localises to the nucleus. It localises to the nucleolus. Functionally, involved in ribosomal large subunit assembly. This chain is Ribosome biogenesis regulatory protein homolog, found in Schizosaccharomyces pombe (strain 972 / ATCC 24843) (Fission yeast).